Reading from the N-terminus, the 117-residue chain is MVQRLTYRRTVSYNTTSNKTRLSRTPGNRIVYLYTKKTGKAPKSACGICPGRLRGIRAVRPQVLMRLSKTKKHVSRAYGGSMCAKCVRDRIKRAFLIEEQKIVVKVLKAQAQSQKAK.

The protein belongs to the eukaryotic ribosomal protein eL34 family. In terms of assembly, component of the large ribosomal subunit.

It is found in the cytoplasm. Its subcellular location is the cytosol. The protein localises to the endoplasmic reticulum. Its function is as follows. Component of the large ribosomal subunit. The ribosome is a large ribonucleoprotein complex responsible for the synthesis of proteins in the cell. The protein is Large ribosomal subunit protein eL34 (rpl34) of Ictalurus punctatus (Channel catfish).